Here is a 1249-residue protein sequence, read N- to C-terminus: ATP-dependent helicase/nuclease subunit A (1249 aa).

Residues 5-482 (TNYTPSQQAV…IVLAENFRSV (478 aa)) form the UvrD-like helicase ATP-binding domain. Residue 26–33 (ASAGSGKT) participates in ATP binding. One can recognise a UvrD-like helicase C-terminal domain in the interval 521–811 (ADMPQTTNLL…NVMTIHGSKG (291 aa)).

It belongs to the helicase family. AddA subfamily. As to quaternary structure, heterodimer of AddA and AddB/RexB. Mg(2+) is required as a cofactor.

It carries out the reaction Couples ATP hydrolysis with the unwinding of duplex DNA by translocating in the 3'-5' direction.. It catalyses the reaction ATP + H2O = ADP + phosphate + H(+). The heterodimer acts as both an ATP-dependent DNA helicase and an ATP-dependent, dual-direction single-stranded exonuclease. Recognizes the chi site generating a DNA molecule suitable for the initiation of homologous recombination. The AddA nuclease domain is required for chi fragment generation; this subunit has the helicase and 3' -&gt; 5' nuclease activities. The polypeptide is ATP-dependent helicase/nuclease subunit A (Lactiplantibacillus plantarum (strain ATCC BAA-793 / NCIMB 8826 / WCFS1) (Lactobacillus plantarum)).